The primary structure comprises 231 residues: Casein kinase II subunit beta (231 aa).

It belongs to the casein kinase 2 subunit beta family. Tetramer composed of two alpha chains, one beta chain and one beta' chain. In terms of processing, phosphorylated by alpha subunit.

Functionally, regulatory subunit of casein kinase II/CK2. As part of the kinase complex regulates the basal catalytic activity of the alpha subunit a constitutively active serine/threonine-protein kinase that phosphorylates a large number of substrates containing acidic residues C-terminal to the phosphorylated serine or threonine. The polypeptide is Casein kinase II subunit beta (Schizosaccharomyces pombe (strain 972 / ATCC 24843) (Fission yeast)).